A 185-amino-acid chain; its full sequence is Peptidyl-tRNA hydrolase (185 aa).

Tyr14 is a binding site for tRNA. His19 acts as the Proton acceptor in catalysis. TRNA-binding residues include Tyr64, Asn66, and Asn112.

This sequence belongs to the PTH family. As to quaternary structure, monomer.

It is found in the cytoplasm. It carries out the reaction an N-acyl-L-alpha-aminoacyl-tRNA + H2O = an N-acyl-L-amino acid + a tRNA + H(+). Functionally, hydrolyzes ribosome-free peptidyl-tRNAs (with 1 or more amino acids incorporated), which drop off the ribosome during protein synthesis, or as a result of ribosome stalling. Its function is as follows. Catalyzes the release of premature peptidyl moieties from peptidyl-tRNA molecules trapped in stalled 50S ribosomal subunits, and thus maintains levels of free tRNAs and 50S ribosomes. This Lactobacillus delbrueckii subsp. bulgaricus (strain ATCC 11842 / DSM 20081 / BCRC 10696 / JCM 1002 / NBRC 13953 / NCIMB 11778 / NCTC 12712 / WDCM 00102 / Lb 14) protein is Peptidyl-tRNA hydrolase.